A 317-amino-acid polypeptide reads, in one-letter code: Ferrochelatase (317 aa).

Histidine 191 and glutamate 271 together coordinate Fe cation.

This sequence belongs to the ferrochelatase family.

It is found in the cytoplasm. The enzyme catalyses heme b + 2 H(+) = protoporphyrin IX + Fe(2+). It functions in the pathway porphyrin-containing compound metabolism; protoheme biosynthesis; protoheme from protoporphyrin-IX: step 1/1. In terms of biological role, catalyzes the ferrous insertion into protoporphyrin IX. In Thermus thermophilus (strain ATCC BAA-163 / DSM 7039 / HB27), this protein is Ferrochelatase.